Consider the following 533-residue polypeptide: Beta-1,4 N-acetylgalactosaminyltransferase 1 (533 aa).

The Cytoplasmic portion of the chain corresponds to 1 to 7; the sequence is MRLDRRA. Residues 8–25 form a helical; Signal-anchor for type II membrane protein membrane-spanning segment; it reads LYALVLLLACASLGLLYS. The Lumenal segment spans residues 26–533; sequence STRNAPSLPN…KHRLQCMTAE (508 aa). 3 N-linked (GlcNAc...) asparagine glycosylation sites follow: Asn-79, Asn-179, and Asn-274. Cysteines 429 and 476 form a disulfide.

The protein belongs to the glycosyltransferase 2 family. In terms of assembly, homodimer; disulfide-linked. Most abundant in brain, liver, lung, spleen and testis.

It localises to the golgi apparatus membrane. The catalysed reaction is a ganglioside GM3 (d18:1(4E)) + UDP-N-acetyl-alpha-D-galactosamine = a ganglioside GM2 (d18:1(4E)) + UDP + H(+). It carries out the reaction a ganglioside GD3 (d18:1(4E)) + UDP-N-acetyl-alpha-D-galactosamine = a ganglioside GD2 (d18:1(4E)) + UDP + H(+). The enzyme catalyses a ganglioside GM3 + UDP-N-acetyl-alpha-D-galactosamine = a ganglioside GM2 + UDP + H(+). It catalyses the reaction a ganglioside GD3 + UDP-N-acetyl-alpha-D-galactosamine = a ganglioside GD2 + UDP + H(+). The catalysed reaction is a ganglioside GD1a + UDP-N-acetyl-alpha-D-galactosamine = a ganglioside GalNAc-GD1a + UDP + H(+). It carries out the reaction a ganglioside GT3 (d18:1(4E)) + UDP-N-acetyl-alpha-D-galactosamine = a ganglioside GT2 (d18:1(4E)) + UDP + H(+). The enzyme catalyses a beta-D-Gal-(1-&gt;4)-beta-D-Glc-(1&lt;-&gt;1)-Cer(d18:1(4E)) + UDP-N-acetyl-alpha-D-galactosamine = a ganglioside GA2 (d18:1(4E)) + UDP + H(+). It catalyses the reaction a neolactoside IV(3)-alpha-NeuGc-nLc4Cer + UDP-N-acetyl-alpha-D-galactosamine = a neolactoside IV(4)-beta-GalNAc-IV(3)-alpha-NeuGc-nLc4Cer + UDP + H(+). Its pathway is sphingolipid metabolism. Involved in the biosynthesis of gangliosides GM2, GD2 and GA2. In terms of biological role, involved in the biosynthesis of gangliosides GM2, GD2, GT2 and GA2 from GM3, GD3, GT3 and GA3, respectively. The protein is Beta-1,4 N-acetylgalactosaminyltransferase 1 of Mus musculus (Mouse).